The sequence spans 229 residues: Leucyl/phenylalanyl-tRNA--protein transferase (229 aa).

Belongs to the L/F-transferase family.

Its subcellular location is the cytoplasm. It catalyses the reaction N-terminal L-lysyl-[protein] + L-leucyl-tRNA(Leu) = N-terminal L-leucyl-L-lysyl-[protein] + tRNA(Leu) + H(+). The catalysed reaction is N-terminal L-arginyl-[protein] + L-leucyl-tRNA(Leu) = N-terminal L-leucyl-L-arginyl-[protein] + tRNA(Leu) + H(+). It carries out the reaction L-phenylalanyl-tRNA(Phe) + an N-terminal L-alpha-aminoacyl-[protein] = an N-terminal L-phenylalanyl-L-alpha-aminoacyl-[protein] + tRNA(Phe). In terms of biological role, functions in the N-end rule pathway of protein degradation where it conjugates Leu, Phe and, less efficiently, Met from aminoacyl-tRNAs to the N-termini of proteins containing an N-terminal arginine or lysine. The protein is Leucyl/phenylalanyl-tRNA--protein transferase of Desulforapulum autotrophicum (strain ATCC 43914 / DSM 3382 / VKM B-1955 / HRM2) (Desulfobacterium autotrophicum).